Here is a 365-residue protein sequence, read N- to C-terminus: Chorismate synthase (365 aa).

Arginine 48 contacts NADP(+). FMN is bound by residues 125-127 (RSS), 238-239 (NA), glycine 278, 293-297 (KPTSS), and arginine 319.

This sequence belongs to the chorismate synthase family. As to quaternary structure, homotetramer. FMNH2 serves as cofactor.

It carries out the reaction 5-O-(1-carboxyvinyl)-3-phosphoshikimate = chorismate + phosphate. Its pathway is metabolic intermediate biosynthesis; chorismate biosynthesis; chorismate from D-erythrose 4-phosphate and phosphoenolpyruvate: step 7/7. Catalyzes the anti-1,4-elimination of the C-3 phosphate and the C-6 proR hydrogen from 5-enolpyruvylshikimate-3-phosphate (EPSP) to yield chorismate, which is the branch point compound that serves as the starting substrate for the three terminal pathways of aromatic amino acid biosynthesis. This reaction introduces a second double bond into the aromatic ring system. The protein is Chorismate synthase of Ruthia magnifica subsp. Calyptogena magnifica.